Consider the following 227-residue polypeptide: Lipoprotein-releasing system ATP-binding protein LolD (227 aa).

Positions 7-227 constitute an ABC transporter domain; it reads LRLERIGRAY…TLKDGRVVDL (221 aa). Position 43–50 (43–50) interacts with ATP; sequence APSGAGKS.

The protein belongs to the ABC transporter superfamily. Lipoprotein translocase (TC 3.A.1.125) family. In terms of assembly, the complex is composed of two ATP-binding proteins (LolD) and two transmembrane proteins (LolC and LolE).

It localises to the cell inner membrane. Part of the ABC transporter complex LolCDE involved in the translocation of mature outer membrane-directed lipoproteins, from the inner membrane to the periplasmic chaperone, LolA. Responsible for the formation of the LolA-lipoprotein complex in an ATP-dependent manner. In Brucella abortus biovar 1 (strain 9-941), this protein is Lipoprotein-releasing system ATP-binding protein LolD.